Here is a 414-residue protein sequence, read N- to C-terminus: CinA-like protein (414 aa).

It belongs to the CinA family.

This is CinA-like protein from Acidobacterium capsulatum (strain ATCC 51196 / DSM 11244 / BCRC 80197 / JCM 7670 / NBRC 15755 / NCIMB 13165 / 161).